A 450-amino-acid polypeptide reads, in one-letter code: Phosphoglucosamine mutase (450 aa).

Serine 101 acts as the Phosphoserine intermediate in catalysis. Residues serine 101, aspartate 242, aspartate 244, and aspartate 246 each coordinate Mg(2+). Serine 101 carries the phosphoserine modification.

This sequence belongs to the phosphohexose mutase family. The cofactor is Mg(2+). Activated by phosphorylation.

It catalyses the reaction alpha-D-glucosamine 1-phosphate = D-glucosamine 6-phosphate. Its function is as follows. Catalyzes the conversion of glucosamine-6-phosphate to glucosamine-1-phosphate. This is Phosphoglucosamine mutase from Rhodopseudomonas palustris (strain BisB5).